The primary structure comprises 318 residues: Acetyl-coenzyme A carboxylase carboxyl transferase subunit alpha (318 aa).

Residues 34–295 enclose the CoA carboxyltransferase C-terminal domain; it reads DIEDQISQLR…KQAIKKDLSE (262 aa).

Belongs to the AccA family. Acetyl-CoA carboxylase is a heterohexamer composed of biotin carboxyl carrier protein (AccB), biotin carboxylase (AccC) and two subunits each of ACCase subunit alpha (AccA) and ACCase subunit beta (AccD).

The protein resides in the cytoplasm. The catalysed reaction is N(6)-carboxybiotinyl-L-lysyl-[protein] + acetyl-CoA = N(6)-biotinyl-L-lysyl-[protein] + malonyl-CoA. The protein operates within lipid metabolism; malonyl-CoA biosynthesis; malonyl-CoA from acetyl-CoA: step 1/1. In terms of biological role, component of the acetyl coenzyme A carboxylase (ACC) complex. First, biotin carboxylase catalyzes the carboxylation of biotin on its carrier protein (BCCP) and then the CO(2) group is transferred by the carboxyltransferase to acetyl-CoA to form malonyl-CoA. The protein is Acetyl-coenzyme A carboxylase carboxyl transferase subunit alpha of Colwellia psychrerythraea (strain 34H / ATCC BAA-681) (Vibrio psychroerythus).